The sequence spans 160 residues: ATP synthase subunit delta, mitochondrial (160 aa).

Residues 1-22 (MLRSIIGKSASRSLNFVAKRSY) constitute a mitochondrion transit peptide.

The protein belongs to the ATPase epsilon chain family. In terms of assembly, F-type ATPases have 2 components, CF(1) - the catalytic core - and CF(0) - the membrane proton channel. CF(1) has five subunits: alpha(3), beta(3), gamma(1), delta(1), epsilon(1). CF(0) has three main subunits: a, b and c.

It localises to the mitochondrion. Its subcellular location is the mitochondrion inner membrane. Its function is as follows. Mitochondrial membrane ATP synthase (F(1)F(0) ATP synthase or Complex V) produces ATP from ADP in the presence of a proton gradient across the membrane which is generated by electron transport complexes of the respiratory chain. F-type ATPases consist of two structural domains, F(1) - containing the extramembraneous catalytic core, and F(0) - containing the membrane proton channel, linked together by a central stalk and a peripheral stalk. During catalysis, ATP turnover in the catalytic domain of F(1) is coupled via a rotary mechanism of the central stalk subunits to proton translocation. Part of the complex F(1) domain and of the central stalk which is part of the complex rotary element. Rotation of the central stalk against the surrounding alpha(3)beta(3) subunits leads to hydrolysis of ATP in three separate catalytic sites on the beta subunits. The polypeptide is ATP synthase subunit delta, mitochondrial (ATP16) (Saccharomyces cerevisiae (strain ATCC 204508 / S288c) (Baker's yeast)).